Consider the following 421-residue polypeptide: UPF0229 protein lpl2726 (421 aa).

The segment at 83–110 (IAGDRIKRPGGGGSGGAGGNASDSGEGE) is disordered. Residues 91–101 (PGGGGSGGAGG) are compositionally biased toward gly residues.

This sequence belongs to the UPF0229 family.

The chain is UPF0229 protein lpl2726 from Legionella pneumophila (strain Lens).